Here is a 74-residue protein sequence, read N- to C-terminus: Imcroporin (74 aa).

Positions 1–22 are cleaved as a signal peptide; it reads MKFQYLLAVFLIVLVVTDHCQA. Residue K39 is modified to Lysine amide; partial. Positions 45–74 are excised as a propeptide; that stretch reads QLEARFEPKQRNFRKRELDFEKLFANMPDY.

The protein belongs to the non-disulfide-bridged peptide (NDBP) superfamily. Short antimicrobial peptide (group 4) family. Expressed by the venom gland.

It localises to the secreted. The protein localises to the target cell membrane. Has potent antibacterial activity against Gram-positive bacteria M.luteus, B.thuringiensis, S.aureus and B.subtilis, but not Gram-negative bacteria. Shows a weak cytotoxicity effect against mammalian cell lines and relatively low hemolytic activity against human erythrocytes. The chain is Imcroporin from Isometrus maculatus (Lesser brown scorpion).